The chain runs to 119 residues: Large ribosomal subunit protein bL20 (119 aa).

This sequence belongs to the bacterial ribosomal protein bL20 family.

Its function is as follows. Binds directly to 23S ribosomal RNA and is necessary for the in vitro assembly process of the 50S ribosomal subunit. It is not involved in the protein synthesizing functions of that subunit. This chain is Large ribosomal subunit protein bL20, found in Delftia acidovorans (strain DSM 14801 / SPH-1).